A 534-amino-acid polypeptide reads, in one-letter code: MDLGKTVEYGTHRQDAIAQIDVPDQVLYTIGSFILIIGSVGIIGNMLVLYAFYRNKKLRTAPNYFIINLAISDFLMSATQAPVCFLSSLHREWILGDIGCNVYAFCGALFGITSMMTLLAISINRYIVITKPLQSIQWSSKKRTSQIIVLVWMYSLMWSLAPLLGWSSYVPEGLRISCTWDYVTSTMSNRSYTMMLCCCVFFIPLIVISHCYLFMFLAIRSTGRNVQKLGSYGRQSFLSQSMKNEWKMAKIAFVIIIVFVLSWSPYACVTLIAWAGHGKSLTPYSKTVPAVIAKASAIYNPIIYGIIHPKYRETIHKTVPCLRFLIREPKKDIFESSVRGSIYGRQSASRKKNSFISTVSTAETVSSHIWDNTPNGHWDRKSLSQTMSNLCSPLLQDPNSSHTLEQTLTWPDDPSPKEILLPSSLKSVTYPIGLESIVKDEHTNNSCVRNHRVDKSGGLDWIINATLPRIVIIPTSESNISETKEEHDNNSEEKSKRTEEEEDFFNFHVDTSLLNLEGLNSSTDLYEVVERFLS.

The Extracellular portion of the chain corresponds to 1 to 32 (MDLGKTVEYGTHRQDAIAQIDVPDQVLYTIGS). A helical transmembrane segment spans residues 33–53 (FILIIGSVGIIGNMLVLYAFY). The Cytoplasmic portion of the chain corresponds to 54 to 64 (RNKKLRTAPNY). The helical transmembrane segment at 65–85 (FIINLAISDFLMSATQAPVCF) threads the bilayer. Residues 86-102 (LSSLHREWILGDIGCNV) lie on the Extracellular side of the membrane. Cys-100 and Cys-178 form a disulfide bridge. Residues 103 to 123 (YAFCGALFGITSMMTLLAISI) traverse the membrane as a helical segment. Residues 124 to 146 (NRYIVITKPLQSIQWSSKKRTSQ) lie on the Cytoplasmic side of the membrane. The chain crosses the membrane as a helical span at residues 147 to 167 (IIVLVWMYSLMWSLAPLLGWS). Topologically, residues 168 to 198 (SYVPEGLRISCTWDYVTSTMSNRSYTMMLCC) are extracellular. Residue Asn-189 is glycosylated (N-linked (GlcNAc...) asparagine). The helical transmembrane segment at 199-219 (CVFFIPLIVISHCYLFMFLAI) threads the bilayer. Residues 220–250 (RSTGRNVQKLGSYGRQSFLSQSMKNEWKMAK) lie on the Cytoplasmic side of the membrane. A helical transmembrane segment spans residues 251–271 (IAFVIIIVFVLSWSPYACVTL). Residues 272–286 (IAWAGHGKSLTPYSK) are Extracellular-facing. A helical membrane pass occupies residues 287–307 (TVPAVIAKASAIYNPIIYGII). Position 294 is an N6-(retinylidene)lysine (Lys-294). The Cytoplasmic portion of the chain corresponds to 308-534 (HPKYRETIHK…LYEVVERFLS (227 aa)). The tract at residues 478 to 501 (SNISETKEEHDNNSEEKSKRTEEE) is disordered. Over residues 482-499 (ETKEEHDNNSEEKSKRTE) the composition is skewed to basic and acidic residues.

Belongs to the G-protein coupled receptor 1 family. Opsin subfamily. As to expression, highest level in the iris, high level in the inner nuclear layer, possibly in horizontal cells, and lowest level in retinal pigment epithelium. Expressed in melanophore cells of the skin.

Its subcellular location is the cell membrane. In terms of biological role, photoreceptor implicated in non-image-forming responses to light. May be able to isomerize covalently bound all-trans retinal back to 11-cis retinal. This is Melanopsin-B from Xenopus laevis (African clawed frog).